The following is a 75-amino-acid chain: uncharacterized protein (75 aa).

The dksA C4-type zinc finger occupies 43 to 67 (CSECGLPIPTTRLRANPFAHRCVSC).

This is an uncharacterized protein from Haemophilus influenzae (strain ATCC 51907 / DSM 11121 / KW20 / Rd).